Here is a 430-residue protein sequence, read N- to C-terminus: MRIGFLGFGKSNRSLLKYLLKHQEAKFFVSEAKTLDGETKKFLEEHSVEYEEGGHTEKLLDCDVVYVSPGIKPDTSIIKLLSSRGAKLSTELQLFLDNVDPKKVVGITGTDGKSTATALMHHVLSRRGFKTFLGGNFGTPAVEALEGEYDYYVLEMSSFQLFWSERPYLSNFLVLNISEDHLDWHSSFEEYVDSKLKPAFLQTEGDLFVYNKHIERLRNLEGVRSRKIPFWTGENFATERELIVHGKKYTLPGNYPYQTRENILAVSILYMEMFNELESFLELLRDFKPLPHRMEYLGQIDGRHFYNDSKATSTHAVLGALSNFDKVVLIMCGIGKKENYSLFVEKASPKLKHLIMFGEISKELAPFVGKIPHSIVENMEEAFEKAMEVSEKGDVILLSPGGASFDMYENYAKRGEHFRELFERHGGDKV.

An ATP-binding site is contributed by 109-115 (GTDGKST).

Belongs to the MurCDEF family.

It is found in the cytoplasm. The enzyme catalyses UDP-N-acetyl-alpha-D-muramoyl-L-alanine + D-glutamate + ATP = UDP-N-acetyl-alpha-D-muramoyl-L-alanyl-D-glutamate + ADP + phosphate + H(+). It functions in the pathway cell wall biogenesis; peptidoglycan biosynthesis. Functionally, cell wall formation. Catalyzes the addition of glutamate to the nucleotide precursor UDP-N-acetylmuramoyl-L-alanine (UMA). The sequence is that of UDP-N-acetylmuramoylalanine--D-glutamate ligase from Thermotoga sp. (strain RQ2).